The primary structure comprises 220 residues: UPF0319 protein Asuc_1002 (220 aa).

Positions 1-21 are cleaved as a signal peptide; the sequence is MKFRLAAVAAAALLASSASFA.

This sequence belongs to the UPF0319 family.

In Actinobacillus succinogenes (strain ATCC 55618 / DSM 22257 / CCUG 43843 / 130Z), this protein is UPF0319 protein Asuc_1002.